Reading from the N-terminus, the 666-residue chain is Zinc finger MYM-type protein 5 (666 aa).

Glycyl lysine isopeptide (Lys-Gly) (interchain with G-Cter in SUMO2) cross-links involve residues lysine 85, lysine 88, lysine 146, and lysine 163. Residues glutamate 87 to glutamine 106 form a disordered region. Positions serine 191–aspartate 212 are disordered. Residues serine 194–glutamine 208 show a composition bias toward polar residues. A Glycyl lysine isopeptide (Lys-Gly) (interchain with G-Cter in SUMO2) cross-link involves residue lysine 222. 4 MYM-type zinc fingers span residues histidine 262 to aspartate 296, glutamine 308 to valine 348, histidine 355 to glycine 390, and lysine 401 to asparagine 428. Glycyl lysine isopeptide (Lys-Gly) (interchain with G-Cter in SUMO2) cross-links involve residues lysine 440, lysine 452, lysine 459, and lysine 549.

In terms of assembly, interacts (via N-terminal 120 amino acid region) with ETV5 (via C-terminal).

The protein localises to the nucleus. Functionally, functions as a transcriptional regulator. This is Zinc finger MYM-type protein 5 (ZMYM5) from Macaca fascicularis (Crab-eating macaque).